The chain runs to 158 residues: NAD(P)H-quinone oxidoreductase subunit J, chloroplastic (158 aa).

It belongs to the complex I 30 kDa subunit family. As to quaternary structure, NDH is composed of at least 16 different subunits, 5 of which are encoded in the nucleus.

The protein localises to the plastid. It localises to the chloroplast thylakoid membrane. It catalyses the reaction a plastoquinone + NADH + (n+1) H(+)(in) = a plastoquinol + NAD(+) + n H(+)(out). The enzyme catalyses a plastoquinone + NADPH + (n+1) H(+)(in) = a plastoquinol + NADP(+) + n H(+)(out). In terms of biological role, NDH shuttles electrons from NAD(P)H:plastoquinone, via FMN and iron-sulfur (Fe-S) centers, to quinones in the photosynthetic chain and possibly in a chloroplast respiratory chain. The immediate electron acceptor for the enzyme in this species is believed to be plastoquinone. Couples the redox reaction to proton translocation, and thus conserves the redox energy in a proton gradient. This Solanum tuberosum (Potato) protein is NAD(P)H-quinone oxidoreductase subunit J, chloroplastic.